Here is a 37-residue protein sequence, read N- to C-terminus: Large ribosomal subunit protein bL36 (37 aa).

The protein belongs to the bacterial ribosomal protein bL36 family.

This Gloeothece citriformis (strain PCC 7424) (Cyanothece sp. (strain PCC 7424)) protein is Large ribosomal subunit protein bL36.